A 376-amino-acid polypeptide reads, in one-letter code: Transcription initiation factor IIA subunit 1 (376 aa).

The residue at position 2 (A2) is an N-acetylalanine. Low complexity-rich tracts occupy residues 69–79 (QVQQQHQPQQQ) and 89–105 (QAQP…TQQV). Disordered stretches follow at residues 69 to 107 (QVQQ…QVLI), 246 to 265 (AQAQ…PAQT), and 274 to 329 (DGTG…QELF). 4 positions are modified to phosphoserine; by TAF1: S280, S281, S316, and S321. Acidic residues predominate over residues 280–329 (SSEEDEDEEEDYDDDEEEDKEKDGAEDGQVEEEPLNSEDDVSDEEGQELF). Residues H343 and R344 each coordinate DNA.

The protein belongs to the TFIIA subunit 1 family. In terms of assembly, TFIIA is a heterodimer of the large unprocessed subunit 1 and a small subunit gamma. It was originally believed to be a heterotrimer of an alpha (p35), a beta (p19) and a gamma subunit (p12). TFIIA forms a complex with TBP. Part of TBP-based Pol II pre-initiation complex (PIC), in which Pol II core assembles with general transcription factors and other specific initiation factors including GTF2E1, GTF2E2, GTF2F1, GTF2F2, TCEA1, ERCC2, ERCC3, GTF2H2, GTF2H3, GTF2H4, GTF2H5, GTF2A1, GTF2A2, GTF2B and TBP; this large multi-subunit PIC complex mediates DNA unwinding and targets Pol II core to the transcription start site where the first phosphodiester bond forms. The alpha and beta subunits are postranslationally produced from the precursor formby TASP1. The cleavage promotes proteasomal degradation.

It is found in the nucleus. TFIIA is a component of the transcription machinery of RNA polymerase II and plays an important role in transcriptional activation. TFIIA in a complex with TBP mediates transcriptional activity. In Pongo abelii (Sumatran orangutan), this protein is Transcription initiation factor IIA subunit 1 (GTF2A1).